We begin with the raw amino-acid sequence, 155 residues long: 6,7-dimethyl-8-ribityllumazine synthase (155 aa).

Residues phenylalanine 23, 57 to 59 (AFE), and 81 to 83 (AVI) each bind 5-amino-6-(D-ribitylamino)uracil. 86–87 (ST) lines the (2S)-2-hydroxy-3-oxobutyl phosphate pocket. Residue histidine 89 is the Proton donor of the active site. Phenylalanine 114 contacts 5-amino-6-(D-ribitylamino)uracil. Residue arginine 128 participates in (2S)-2-hydroxy-3-oxobutyl phosphate binding.

It belongs to the DMRL synthase family.

The catalysed reaction is (2S)-2-hydroxy-3-oxobutyl phosphate + 5-amino-6-(D-ribitylamino)uracil = 6,7-dimethyl-8-(1-D-ribityl)lumazine + phosphate + 2 H2O + H(+). Its pathway is cofactor biosynthesis; riboflavin biosynthesis; riboflavin from 2-hydroxy-3-oxobutyl phosphate and 5-amino-6-(D-ribitylamino)uracil: step 1/2. Functionally, catalyzes the formation of 6,7-dimethyl-8-ribityllumazine by condensation of 5-amino-6-(D-ribitylamino)uracil with 3,4-dihydroxy-2-butanone 4-phosphate. This is the penultimate step in the biosynthesis of riboflavin. The polypeptide is 6,7-dimethyl-8-ribityllumazine synthase (Pelobacter propionicus (strain DSM 2379 / NBRC 103807 / OttBd1)).